A 419-amino-acid polypeptide reads, in one-letter code: Protein distal antenna-related (419 aa).

In terms of domain architecture, HTH psq-type spans threonine 15–leucine 66. Positions lysine 42–asparagine 62 form a DNA-binding region, H-T-H motif. 2 disordered regions span residues glutamine 333–glutamate 359 and glutamate 378–glutamine 419.

In terms of assembly, interacts with itself, dan, ey and dac to form a complex (or complexes) containing the RD factors. Coexpressed with dan in the presumptive distal antenna, but not in the leg imaginal disk. Both proteins are also expressed in the brain and the eye region of the eye-antenna disk. First detected in early L3 eye disks in cells surrounding the newly initiated morphogenetic furrow. Highly expressed in evenly spaced clusters of cells anterior to the furrow, lower levels within and posterior to the furrow.

It is found in the nucleus. Functionally, probable transcription factor with a role in the retinal determination (RD) network. Regulates ato expression and is required for normal R8 induction and differentiation. Danr appears to repress Dan expression, but Dan is required for Danr expression anterior to the morphogenetic furrow (MF). Dan and Danr lie downstream of so and require dac function for highest levels of expression. Contributes to differentiation of antenna-specific characteristics; effector gene that acts downstream of homothorax (hth), Distal-less (Dll), cut (ct) and spineless (ss) genes to control differentiation of distal antennal structures. This is Protein distal antenna-related from Drosophila melanogaster (Fruit fly).